We begin with the raw amino-acid sequence, 255 residues long: tRNA1(Val) (adenine(37)-N6)-methyltransferase (255 aa).

This sequence belongs to the methyltransferase superfamily. tRNA (adenine-N(6)-)-methyltransferase family.

It localises to the cytoplasm. It carries out the reaction adenosine(37) in tRNA1(Val) + S-adenosyl-L-methionine = N(6)-methyladenosine(37) in tRNA1(Val) + S-adenosyl-L-homocysteine + H(+). In terms of biological role, specifically methylates the adenine in position 37 of tRNA(1)(Val) (anticodon cmo5UAC). This chain is tRNA1(Val) (adenine(37)-N6)-methyltransferase, found in Porphyromonas gingivalis (strain ATCC 33277 / DSM 20709 / CIP 103683 / JCM 12257 / NCTC 11834 / 2561).